The following is a 692-amino-acid chain: Transforming growth factor beta activator LRRC33 (692 aa).

The first 24 residues, 1–24 (MEFLPLWLCLGFHFLIVEWRSGRG), serve as a signal peptide directing secretion. Over 25-650 (TATAASQGGC…CKWGQVDTGL (626 aa)) the chain is Extracellular. The region spanning 29-56 (ASQGGCKVVDRVADCRSLNLASVPSGLP) is the LRRNT domain. LRR repeat units lie at residues 58-79 (HSRM…SLQA), 82-103 (RLED…AFHE), 106-127 (HLQN…SATA), 133-155 (RLRR…MLQN), 158-179 (SLEV…VFEG), 182-203 (RLVE…AFDG), 206-227 (ELRR…SLTQ), 228-239 (LRFLNVSYNILE), 251-272 (ELEI…PQCG), and 273-294 (KLHT…YNTS). Asparagine 74 carries an N-linked (GlcNAc...) asparagine glycan. The N-linked (GlcNAc...) asparagine glycan is linked to asparagine 155. Residue asparagine 232 is glycosylated (N-linked (GlcNAc...) asparagine). Asparagine 292, asparagine 309, and asparagine 312 each carry an N-linked (GlcNAc...) asparagine glycan. 11 LRR repeats span residues 329–350 (ALRF…FLKK), 353–374 (SLSH…EHEP), 377–398 (ALTE…PGLT), 403–424 (NLRV…LFHS), 427–448 (SITT…VPLD), 463–484 (SLRS…PFQG), 486–507 (SLTH…SPLS), 512–533 (TLQV…MDFS), 537–558 (NLRE…KGSS), 559–580 (ALQT…VVSE), and 585–605 (GLQT…EGWG). A glycan (N-linked (GlcNAc...) asparagine) is linked at asparagine 408. A glycan (N-linked (GlcNAc...) asparagine) is linked at asparagine 500. The 38-residue stretch at 606–643 (ALQHFKTIADLSMVTCNLSSKIIRVVELPEGIPQDCKW) folds into the LRRCT domain. The N-linked (GlcNAc...) asparagine glycan is linked to asparagine 622. Residues 651 to 671 (FYLVLILPSCLTLLVASTVIF) traverse the membrane as a helical segment. The Cytoplasmic portion of the chain corresponds to 672 to 692 (LTFKKPLLQVIKSRCHWSSIY).

The protein belongs to the LRRC32/LRRC33 family. In terms of assembly, interacts (via LRR repeats) with TLR2, TLR3, TLR4, TLR9 and probably other Toll-like receptors. Interacts with CYBB/NOX2; the interaction is direct. Interacts with TGFB1; associates via disulfide bonds with the Latency-associated peptide chain (LAP) regulatory chain of TGFB1, leading to regulate activation of TGF-beta-1.

It localises to the cell membrane. Its subcellular location is the endoplasmic reticulum membrane. Functionally, key regulator of transforming growth factor beta-1 (TGFB1) specifically required for microglia function in the nervous system. Required for activation of latent TGF-beta-1 in macrophages and microglia: associates specifically via disulfide bonds with the Latency-associated peptide (LAP), which is the regulatory chain of TGFB1, and regulates integrin-dependent activation of TGF-beta-1. TGF-beta-1 activation mediated by LRRC33/NRROS is highly localized: there is little spreading of TGF-beta-1 activated from one microglial cell to neighboring microglia, suggesting the existence of localized and selective activation of TGF-beta-1 by LRRC33/NRROS. Indirectly plays a role in Toll-like receptor (TLR) signaling: ability to inhibit TLR-mediated NF-kappa-B activation and cytokine production is probably a consequence of its role in TGF-beta-1 signaling. This Rattus norvegicus (Rat) protein is Transforming growth factor beta activator LRRC33.